A 298-amino-acid polypeptide reads, in one-letter code: ADP/ATP translocase 1 (298 aa).

Over 1-7 (MGDHAWS) the chain is Mitochondrial intermembrane. Gly-2 bears the N-acetylglycine mark. A Solcar 1 repeat occupies 6 to 98 (WSFLKDFLAG…FAFKDKYKQL (93 aa)). A Phosphoserine modification is found at Ser-7. A helical transmembrane segment spans residues 8 to 37 (FLKDFLAGGVAAAVSKTAVAPIERVKLLLQ). Residues 38 to 74 (VQHASKQISAEKQYKGIIDCVVRIPKEQGFLSFWRGN) are Mitochondrial matrix-facing. Residue Lys-52 is modified to N6,N6,N6-trimethyllysine. Residues 75–99 (LANVIRYFPTQALNFAFKDKYKQLF) form a helical membrane-spanning segment. Positions 80 and 92 each coordinate ADP. Over 100 to 109 (LGGVDRHKQF) the chain is Mitochondrial intermembrane. The helical transmembrane segment at 110-130 (WRYFAGNLASGGAAGATSLCF) threads the bilayer. 2 Solcar repeats span residues 111–201 (RYFA…AKGM) and 212–297 (VSWM…IKKY). Residues 131–178 (VYPLDFARTRLAADVGKGAAQREFHGLGDCIIKIFKSDGLRGLYQGFN) are Mitochondrial matrix-facing. Lys-147 bears the N6-succinyllysine mark. Position 160 is an S-nitrosocysteine (Cys-160). Residues 179 to 199 (VSVQGIIIYRAAYFGVYDTAK) traverse the membrane as a helical segment. The Mitochondrial intermembrane segment spans residues 200 to 210 (GMLPDPKNVHI). A helical membrane pass occupies residues 211 to 231 (FVSWMIAQSVTAVAGLVSYPF). The Mitochondrial matrix segment spans residues 232–273 (DTVRRRMMMQSGRKGADIMYTGTVDCWRKIAKDEGAKAFFKG). ADP is bound at residue Arg-235. An important for transport activity region spans residues 235-240 (RRRMMM). Residues 235-240 (RRRMMM) carry the Nucleotide carrier signature motif motif. Lys-245 and Lys-272 each carry N6-succinyllysine. The chain crosses the membrane as a helical span at residues 274-291 (AWSNVLRGMGGAFVLVLY). The Mitochondrial intermembrane portion of the chain corresponds to 292–298 (DEIKKYV).

It belongs to the mitochondrial carrier (TC 2.A.29) family. As to quaternary structure, monomer. Found in a complex with ARL2, ARL2BP and SLC25A4/ANT1. Interacts with ARL2BP. Interacts with ARHGAP11B, thereby inhibiting the mitochondrial permeability transition pore (mPTP). Interacts with TIMM44; leading to inhibit the presequence translocase TIMM23, thereby promoting stabilization of PINK1. In terms of assembly, (Microbial infection) Interacts with HIV-1 Vpr. Post-translationally, under cell death induction, transglutaminated by TGM2. Transglutamination leads to formation of covalent cross-links between a glutamine and the epsilon-amino group of a lysine residue, forming polymers. In terms of tissue distribution, expressed in erythrocytes (at protein level).

It is found in the mitochondrion inner membrane. The protein localises to the membrane. It catalyses the reaction ADP(in) + ATP(out) = ADP(out) + ATP(in). It carries out the reaction H(+)(in) = H(+)(out). Its activity is regulated as follows. The matrix-open state (m-state) is inhibited by the membrane-permeable bongkrekic acid (BKA). The cytoplasmic-open state (c-state) is inhibited by the membrane-impermeable toxic inhibitor carboxyatractyloside (CATR). Proton transporter activity is inhibited by ADP:ATP antiporter activity. Its function is as follows. ADP:ATP antiporter that mediates import of ADP into the mitochondrial matrix for ATP synthesis, and export of ATP out to fuel the cell. Cycles between the cytoplasmic-open state (c-state) and the matrix-open state (m-state): operates by the alternating access mechanism with a single substrate-binding site intermittently exposed to either the cytosolic (c-state) or matrix (m-state) side of the inner mitochondrial membrane. In addition to its ADP:ATP antiporter activity, also involved in mitochondrial uncoupling and mitochondrial permeability transition pore (mPTP) activity. Plays a role in mitochondrial uncoupling by acting as a proton transporter: proton transport uncouples the proton flows via the electron transport chain and ATP synthase to reduce the efficiency of ATP production and cause mitochondrial thermogenesis. Proton transporter activity is inhibited by ADP:ATP antiporter activity, suggesting that SLC25A4/ANT1 acts as a master regulator of mitochondrial energy output by maintaining a delicate balance between ATP production (ADP:ATP antiporter activity) and thermogenesis (proton transporter activity). Proton transporter activity requires free fatty acids as cofactor, but does not transport it. Also plays a key role in mPTP opening, a non-specific pore that enables free passage of the mitochondrial membranes to solutes of up to 1.5 kDa, and which contributes to cell death. It is however unclear if SLC25A4/ANT1 constitutes a pore-forming component of mPTP or regulates it. Acts as a regulator of mitophagy independently of ADP:ATP antiporter activity: promotes mitophagy via interaction with TIMM44, leading to inhibit the presequence translocase TIMM23, thereby promoting stabilization of PINK1. This chain is ADP/ATP translocase 1, found in Homo sapiens (Human).